The chain runs to 147 residues: UPF0178 protein Tgr7_2584 (147 aa).

The protein belongs to the UPF0178 family.

This is UPF0178 protein Tgr7_2584 from Thioalkalivibrio sulfidiphilus (strain HL-EbGR7).